Here is a 218-residue protein sequence, read N- to C-terminus: Small ribosomal subunit protein uS3 (218 aa).

A KH type-2 domain is found at 43-113 (IREHIERKLA…KVQVNVREVS (71 aa)).

Belongs to the universal ribosomal protein uS3 family. Part of the 30S ribosomal subunit. Forms a tight complex with proteins S10 and S14.

Binds the lower part of the 30S subunit head. Binds mRNA in the 70S ribosome, positioning it for translation. The chain is Small ribosomal subunit protein uS3 from Rubrobacter xylanophilus (strain DSM 9941 / JCM 11954 / NBRC 16129 / PRD-1).